The chain runs to 302 residues: Meiotic recombination protein rec14 (302 aa).

WD repeat units follow at residues 14–51, 57–96, 101–140, 142–184, 185–226, 227–266, and 269–302; these read AHQA…HSLV, PHKL…FRDL, QHPS…KISE, DTKG…HVLS, GHTS…GQLR, GHAA…CIST, and ETDG…AATE.

As to quaternary structure, component of the DSB catalytic core (DSBC) complex, composed of at least rec12, rec6 and rec14. The complex interacts with mde2.

In terms of biological role, required for formation of the rec12-mediated double-strand breaks (DSBs) that initiate meiotic recombination. The polypeptide is Meiotic recombination protein rec14 (Schizosaccharomyces pombe (strain 972 / ATCC 24843) (Fission yeast)).